Here is a 79-residue protein sequence, read N- to C-terminus: Large ribosomal subunit protein bL31 (79 aa).

The protein belongs to the bacterial ribosomal protein bL31 family. Type A subfamily. As to quaternary structure, part of the 50S ribosomal subunit.

Binds the 23S rRNA. The protein is Large ribosomal subunit protein bL31 of Trichormus variabilis (strain ATCC 29413 / PCC 7937) (Anabaena variabilis).